The primary structure comprises 287 residues: 2-dehydro-3-deoxyphosphooctonate aldolase (287 aa).

This sequence belongs to the KdsA family.

It is found in the cytoplasm. It carries out the reaction D-arabinose 5-phosphate + phosphoenolpyruvate + H2O = 3-deoxy-alpha-D-manno-2-octulosonate-8-phosphate + phosphate. It functions in the pathway carbohydrate biosynthesis; 3-deoxy-D-manno-octulosonate biosynthesis; 3-deoxy-D-manno-octulosonate from D-ribulose 5-phosphate: step 2/3. The protein operates within bacterial outer membrane biogenesis; lipopolysaccharide biosynthesis. This Leptospira interrogans serogroup Icterohaemorrhagiae serovar copenhageni (strain Fiocruz L1-130) protein is 2-dehydro-3-deoxyphosphooctonate aldolase.